A 262-amino-acid chain; its full sequence is Phosphatidylserine decarboxylase proenzyme (262 aa).

Residues aspartate 86, histidine 142, and serine 226 each act as charge relay system; for autoendoproteolytic cleavage activity in the active site. Serine 226 (schiff-base intermediate with substrate; via pyruvic acid; for decarboxylase activity) is an active-site residue. Serine 226 is subject to Pyruvic acid (Ser); by autocatalysis.

It belongs to the phosphatidylserine decarboxylase family. PSD-B subfamily. Prokaryotic type I sub-subfamily. Heterodimer of a large membrane-associated beta subunit and a small pyruvoyl-containing alpha subunit. Pyruvate is required as a cofactor. Post-translationally, is synthesized initially as an inactive proenzyme. Formation of the active enzyme involves a self-maturation process in which the active site pyruvoyl group is generated from an internal serine residue via an autocatalytic post-translational modification. Two non-identical subunits are generated from the proenzyme in this reaction, and the pyruvate is formed at the N-terminus of the alpha chain, which is derived from the carboxyl end of the proenzyme. The autoendoproteolytic cleavage occurs by a canonical serine protease mechanism, in which the side chain hydroxyl group of the serine supplies its oxygen atom to form the C-terminus of the beta chain, while the remainder of the serine residue undergoes an oxidative deamination to produce ammonia and the pyruvoyl prosthetic group on the alpha chain. During this reaction, the Ser that is part of the protease active site of the proenzyme becomes the pyruvoyl prosthetic group, which constitutes an essential element of the active site of the mature decarboxylase.

The protein localises to the cell membrane. It carries out the reaction a 1,2-diacyl-sn-glycero-3-phospho-L-serine + H(+) = a 1,2-diacyl-sn-glycero-3-phosphoethanolamine + CO2. Its pathway is phospholipid metabolism; phosphatidylethanolamine biosynthesis; phosphatidylethanolamine from CDP-diacylglycerol: step 2/2. Functionally, catalyzes the formation of phosphatidylethanolamine (PtdEtn) from phosphatidylserine (PtdSer). This is Phosphatidylserine decarboxylase proenzyme from Bacillus cereus (strain ZK / E33L).